Consider the following 987-residue polypeptide: KAT8 regulatory NSL complex subunit 1-like protein (987 aa).

Lys-134 is covalently cross-linked (Glycyl lysine isopeptide (Lys-Gly) (interchain with G-Cter in SUMO2)). Position 462 is a phosphoserine (Ser-462). A disordered region spans residues 708-738 (RKKRHLSETALGERTKLEESDFQHTESGSHS). A compositionally biased stretch (basic and acidic residues) spans 718-731 (LGERTKLEESDFQH). Positions 794–915 (EILTPSWRMV…QSQETKSLWW (122 aa)) constitute a PEHE domain. Lys-859 is subject to N6-acetyllysine. Positions 949–972 (GEIFGTSVPENGHHPKKQSDGMEE) are disordered. The span at 959-972 (NGHHPKKQSDGMEE) shows a compositional bias: basic and acidic residues.

Post-translationally, acetylated on lysine residues by KAT8 upon ionizing radiation-induced DNA damage; deacetylated by HDAC3.

The polypeptide is KAT8 regulatory NSL complex subunit 1-like protein (KANSL1L) (Homo sapiens (Human)).